A 486-amino-acid chain; its full sequence is Ribulose bisphosphate carboxylase large chain 1 (486 aa).

The substrate site is built by Asn-125 and Thr-175. Lys-177 (proton acceptor) is an active-site residue. Lys-179 serves as a coordination point for substrate. The Mg(2+) site is built by Lys-203, Asp-205, and Glu-206. Lys-203 is modified (N6-carboxylysine). His-295 serves as the catalytic Proton acceptor. Substrate contacts are provided by Arg-296, His-328, and Ser-380.

It belongs to the RuBisCO large chain family. Type I subfamily. As to quaternary structure, heterohexadecamer of 8 large chains and 8 small chains. The cofactor is Mg(2+).

It catalyses the reaction 2 (2R)-3-phosphoglycerate + 2 H(+) = D-ribulose 1,5-bisphosphate + CO2 + H2O. The catalysed reaction is D-ribulose 1,5-bisphosphate + O2 = 2-phosphoglycolate + (2R)-3-phosphoglycerate + 2 H(+). Its function is as follows. RuBisCO catalyzes two reactions: the carboxylation of D-ribulose 1,5-bisphosphate, the primary event in carbon dioxide fixation, as well as the oxidative fragmentation of the pentose substrate. Both reactions occur simultaneously and in competition at the same active site. The polypeptide is Ribulose bisphosphate carboxylase large chain 1 (Bradyrhizobium sp. (strain ORS 278)).